We begin with the raw amino-acid sequence, 347 residues long: Protein RecA (347 aa).

ATP is bound at residue Gly-65–Thr-72.

It belongs to the RecA family.

The protein resides in the cytoplasm. Its function is as follows. Can catalyze the hydrolysis of ATP in the presence of single-stranded DNA, the ATP-dependent uptake of single-stranded DNA by duplex DNA, and the ATP-dependent hybridization of homologous single-stranded DNAs. It interacts with LexA causing its activation and leading to its autocatalytic cleavage. This is Protein RecA from Aliivibrio salmonicida (strain LFI1238) (Vibrio salmonicida (strain LFI1238)).